Here is a 328-residue protein sequence, read N- to C-terminus: Nickel import system permease protein NikB (328 aa).

Transmembrane regions (helical) follow at residues 11–31 (LMQM…LMKL), 104–124 (LLIS…LGII), 139–159 (VIST…LLFI), 170–190 (ILSQ…AYII), 229–249 (ILPI…GTVV), and 279–299 (VLFI…LTLL). The ABC transmembrane type-1 domain maps to 100–297 (APITLLISFS…IINTIADLLT (198 aa)).

Belongs to the binding-protein-dependent transport system permease family. OppBC subfamily. The complex is composed of two ATP-binding proteins (NikD and NikE), two transmembrane proteins (NikB and NikC) and a solute-binding protein (NikA).

The protein resides in the cell membrane. In terms of biological role, part of the ABC transporter complex NikABCDE (Opp2) involved in nickel import. Probably responsible for the translocation of the substrate across the membrane. The polypeptide is Nickel import system permease protein NikB (Staphylococcus aureus (strain Mu50 / ATCC 700699)).